Consider the following 444-residue polypeptide: Deoxyguanosinetriphosphate triphosphohydrolase-like protein (444 aa).

A disordered region spans residues 1–26 (MIASPWHERRLNEDKKRRNDHRSPFQ). Residues 59-250 (RLTHSLEVSQ…MELADDIAYA (192 aa)) form the HD domain.

Belongs to the dGTPase family. Type 2 subfamily.

This chain is Deoxyguanosinetriphosphate triphosphohydrolase-like protein, found in Shewanella woodyi (strain ATCC 51908 / MS32).